A 446-amino-acid chain; its full sequence is 3-phosphoshikimate 1-carboxyvinyltransferase (446 aa).

The interval 1-20 (MIMAKPLSSRRAAPLAGSAP) is disordered. The 3-phosphoshikimate site is built by lysine 25, serine 26, and arginine 30. Lysine 25 lines the phosphoenolpyruvate pocket. The phosphoenolpyruvate site is built by glycine 98 and arginine 126. 3-phosphoshikimate-binding residues include serine 171, glutamine 173, aspartate 324, and lysine 351. Glutamine 173 contacts phosphoenolpyruvate. Aspartate 324 functions as the Proton acceptor in the catalytic mechanism. The phosphoenolpyruvate site is built by arginine 355 and arginine 399.

Belongs to the EPSP synthase family. Monomer.

The protein localises to the cytoplasm. The catalysed reaction is 3-phosphoshikimate + phosphoenolpyruvate = 5-O-(1-carboxyvinyl)-3-phosphoshikimate + phosphate. The protein operates within metabolic intermediate biosynthesis; chorismate biosynthesis; chorismate from D-erythrose 4-phosphate and phosphoenolpyruvate: step 6/7. In terms of biological role, catalyzes the transfer of the enolpyruvyl moiety of phosphoenolpyruvate (PEP) to the 5-hydroxyl of shikimate-3-phosphate (S3P) to produce enolpyruvyl shikimate-3-phosphate and inorganic phosphate. The polypeptide is 3-phosphoshikimate 1-carboxyvinyltransferase (Paramagnetospirillum magneticum (strain ATCC 700264 / AMB-1) (Magnetospirillum magneticum)).